Reading from the N-terminus, the 832-residue chain is Thymine dioxygenase JBP1-A (832 aa).

Positions 1 to 12 (MKQKRGKQDVKM) are enriched in basic and acidic residues. Residues 1-24 (MKQKRGKQDVKMLESAPPQLLPKK) form a disordered region. The thymine dioxygenase stretch occupies residues 80 to 282 (VVGGVFLPGA…RLTCVCYYRA (203 aa)). Fe cation-binding residues include histidine 207, aspartate 209, and histidine 257. Residue arginine 273 participates in 2-oxoglutarate binding. A DNA-binding JBP1 domain region spans residues 409-578 (LGGALKAAEE…IEEARRRGSS (170 aa)).

This sequence belongs to the TET family. JBP1 subfamily. In terms of assembly, monomer. Binds to DNA as a monomer. Fe(2+) is required as a cofactor.

The protein resides in the nucleus. The catalysed reaction is thymine + 2-oxoglutarate + O2 = 5-hydroxymethyluracil + succinate + CO2. Dioxygenase that catalyzes the first step of DNA base J (beta-d-glucosyl-HOMedU) biosynthesis by converting thymine to 5-hydroxymethyluracil (HOMedU). DNA base J is a hypermodified thymidine residue found in the genome of kinetoplastid parasites, which is localized primarily to repetitive DNA, namely the telomeres, and is implicated in the regulation of antigenic variation. Also specifically binds to base J-containing DNA (J-DNA). Involved in propagation and maintenance of DNA base J synthesis initiated by JBP2 by specifically binding already synthesized DNA base J and propagating J synthesis. Thymine dioxygenase activity and J-DNA-binding are independent functions. This Trypanosoma cruzi (strain CL Brener) protein is Thymine dioxygenase JBP1-A (JBP1A).